We begin with the raw amino-acid sequence, 351 residues long: Palmitoyltransferase spe-10 (351 aa).

A run of 4 helical transmembrane segments spans residues 21–43 (TGWI…LWWS), 60–80 (IQAT…MWSL), 198–218 (YFLL…LTSL), and 241–261 (LFSF…LIIF). Positions 154-204 (KYCYECGHIKPDRARHCSSCGKCCIKYDHHCPWINMCVTHVNYKYFLLYII) constitute a DHHC domain.

This sequence belongs to the DHHC palmitoyltransferase family. Expressed during spermatogenesis in budding and budded spermatids.

It is found in the membrane. It carries out the reaction L-cysteinyl-[protein] + hexadecanoyl-CoA = S-hexadecanoyl-L-cysteinyl-[protein] + CoA. Involved in spermatogenesis, specifically in the morphogenesis of fibrous body-membranous organelles (FB-MO), which are Golgi-derived organelles used for transporting sperm-specific components, in spermatocytes and in their localization into budding spermatids. Required for the proper formation of spermatids and spermatozoa. This chain is Palmitoyltransferase spe-10, found in Caenorhabditis elegans.